The sequence spans 423 residues: Subtilisin-like protease 2 (423 aa).

The signal sequence occupies residues 1 to 17 (MQLLNLGLLLLLPFVAG). Residues 18–123 (EIAPQPEPLR…VHPDQHVYLA (106 aa)) constitute a propeptide that is removed on maturation. Residues 37–123 (QYIVTLKEGL…VHPDQHVYLA (87 aa)) form the Inhibitor I9 domain. Positions 132–423 (RWGLGYMSSK…RKFTLPKNTK (292 aa)) constitute a Peptidase S8 domain. Residues D170 and H202 each act as charge relay system in the active site. 3 N-linked (GlcNAc...) asparagine glycosylation sites follow: N249, N262, and N349. The active-site Charge relay system is the S358. N-linked (GlcNAc...) asparagine glycosylation occurs at N389.

The protein belongs to the peptidase S8 family.

It localises to the secreted. Secreted subtilisin-like serine protease with keratinolytic activity that contributes to pathogenicity. The polypeptide is Subtilisin-like protease 2 (SUB2) (Arthroderma otae (strain ATCC MYA-4605 / CBS 113480) (Microsporum canis)).